A 423-amino-acid polypeptide reads, in one-letter code: Methanol:N,N-dimethyl-4-nitrosoaniline oxidoreductase (423 aa).

Belongs to the iron-containing alcohol dehydrogenase family. In terms of assembly, homodecamer. The cofactor is Mg(2+). It depends on Zn(2+) as a cofactor. NADPH serves as cofactor.

It carries out the reaction methanol + A = formaldehyde + AH2. Its function is as follows. Catalyzes the oxidation of methanol to yield formaldehyde. While the in vivo electron acceptor is not known, N,N-dimethyl-4-nitrosoaniline (NDMA) can serve this function in vitro and is reduced to 4-(hydroxylamino)-N,N-dimethylaniline. It is also able to use ethanol and formaldehyde with an activity comparable to methanol, and has a weak activity with methylamine as substrate. This Mycobacterium sp. (strain DSM 3803 / JC1) protein is Methanol:N,N-dimethyl-4-nitrosoaniline oxidoreductase.